The primary structure comprises 890 residues: tRNase Z TRZ3, mitochondrial (890 aa).

Residues 1 to 44 constitute a mitochondrion transit peptide; that stretch reads MINSMPYLHKNLRLLRLLSSKSSPFPLSLRPFSPRSFSLSTLFS. Residues 46–67 are disordered; the sequence is SSSSSSMENNEATNGSKSSSNS.

The protein belongs to the RNase Z family. In terms of assembly, homodimer. Requires Zn(2+) as cofactor. Ca(2+) is required as a cofactor. Mn(2+) serves as cofactor. The cofactor is Mg(2+).

The protein resides in the mitochondrion. The protein localises to the nucleus. It catalyses the reaction Endonucleolytic cleavage of RNA, removing extra 3' nucleotides from tRNA precursor, generating 3' termini of tRNAs. A 3'-hydroxy group is left at the tRNA terminus and a 5'-phosphoryl group is left at the trailer molecule.. Zinc phosphodiesterase, which displays tRNA 3'-processing endonuclease activity. Involved in tRNA maturation, by removing a 3'-trailer from precursor tRNA. Can process the mitochondrial tRNA-like structures (t-elements). Involved in the processing of small nucleolar RNAs (snoRNAs). The chain is tRNase Z TRZ3, mitochondrial from Arabidopsis thaliana (Mouse-ear cress).